The primary structure comprises 393 residues: Methylthioribose kinase (393 aa).

Residues Asn38, Lys53, and 107-109 (EDL) each bind ATP. A substrate-binding site is contributed by Asp225. 242–244 (DPE) provides a ligand contact to ATP. Position 332 (Arg332) interacts with substrate.

This sequence belongs to the methylthioribose kinase family. In terms of assembly, homodimer.

It carries out the reaction 5-(methylsulfanyl)-D-ribose + ATP = 5-(methylsulfanyl)-alpha-D-ribose 1-phosphate + ADP + H(+). The protein operates within amino-acid biosynthesis; L-methionine biosynthesis via salvage pathway; S-methyl-5-thio-alpha-D-ribose 1-phosphate from S-methyl-5'-thioadenosine (hydrolase route): step 2/2. Catalyzes the phosphorylation of methylthioribose into methylthioribose-1-phosphate. The protein is Methylthioribose kinase of Bacillus cereus (strain AH187).